Consider the following 116-residue polypeptide: Non-specific lipid-transfer protein (116 aa).

The first 22 residues, 1-22, serve as a signal peptide directing secretion; it reads MSLKLACVVVLCMVVGAPLAQG. 3 disulfide bridges follow: Cys36–Cys52, Cys53–Cys98, and Cys73–Cys112.

The protein belongs to the plant LTP family.

Its function is as follows. Plant non-specific lipid-transfer proteins transfer phospholipids as well as galactolipids across membranes. May play a role in wax or cutin deposition in the cell walls of expanding epidermal cells and certain secretory tissues. The protein is Non-specific lipid-transfer protein of Gossypium hirsutum (Upland cotton).